The sequence spans 24 residues: MAKEQQVQANDLQEKLIAVNRVAK.

Belongs to the universal ribosomal protein uS5 family. In terms of assembly, part of the 30S ribosomal subunit. Contacts proteins S4 and S8.

In terms of biological role, with S4 and S12 plays an important role in translational accuracy. Functionally, located at the back of the 30S subunit body where it stabilizes the conformation of the head with respect to the body. This chain is Small ribosomal subunit protein uS5 (rpsE), found in Vibrio proteolyticus (Aeromonas proteolytica).